The primary structure comprises 251 residues: Ribonuclease HII (251 aa).

Residues Gly32 to Leu223 enclose the RNase H type-2 domain. Residues Asp38, Glu39, and Asp132 each coordinate a divalent metal cation.

The protein belongs to the RNase HII family. Mn(2+) is required as a cofactor. It depends on Mg(2+) as a cofactor.

Its subcellular location is the cytoplasm. It catalyses the reaction Endonucleolytic cleavage to 5'-phosphomonoester.. In terms of biological role, endonuclease that specifically degrades the RNA of RNA-DNA hybrids. The polypeptide is Ribonuclease HII (Nocardia farcinica (strain IFM 10152)).